Consider the following 325-residue polypeptide: Lipoyl synthase (325 aa).

The segment at 1–33 (MATVIDTLKARGSEDRAARHPEKQNRPDTPVLR) is disordered. Basic and acidic residues predominate over residues 8-33 (LKARGSEDRAARHPEKQNRPDTPVLR). C64, C69, C75, C90, C94, C97, and S303 together coordinate [4Fe-4S] cluster. The Radical SAM core domain occupies 76-292 (WSQKHATMMI…EAIARAKGFL (217 aa)).

Belongs to the radical SAM superfamily. Lipoyl synthase family. [4Fe-4S] cluster is required as a cofactor.

It is found in the cytoplasm. It catalyses the reaction [[Fe-S] cluster scaffold protein carrying a second [4Fe-4S](2+) cluster] + N(6)-octanoyl-L-lysyl-[protein] + 2 oxidized [2Fe-2S]-[ferredoxin] + 2 S-adenosyl-L-methionine + 4 H(+) = [[Fe-S] cluster scaffold protein] + N(6)-[(R)-dihydrolipoyl]-L-lysyl-[protein] + 4 Fe(3+) + 2 hydrogen sulfide + 2 5'-deoxyadenosine + 2 L-methionine + 2 reduced [2Fe-2S]-[ferredoxin]. Its pathway is protein modification; protein lipoylation via endogenous pathway; protein N(6)-(lipoyl)lysine from octanoyl-[acyl-carrier-protein]: step 2/2. Functionally, catalyzes the radical-mediated insertion of two sulfur atoms into the C-6 and C-8 positions of the octanoyl moiety bound to the lipoyl domains of lipoate-dependent enzymes, thereby converting the octanoylated domains into lipoylated derivatives. The sequence is that of Lipoyl synthase from Caulobacter vibrioides (strain ATCC 19089 / CIP 103742 / CB 15) (Caulobacter crescentus).